The following is a 22-amino-acid chain: Brevinin-1OKa (22 aa).

Residue Lys-22 is modified to Lysine amide.

Expressed by the skin glands.

It localises to the secreted. Antimicrobial peptide. Active against Gram-negative bacterium E.coli (MIC=12.5 uM) and against Gram-positive bacterium S.aureus (MIC=12.5 uM). The sequence is that of Brevinin-1OKa from Nidirana okinavana (Kampira Falls frog).